A 232-amino-acid polypeptide reads, in one-letter code: RNA chaperone ProQ (232 aa).

The disordered stretch occupies residues glutamate 105–aspartate 182. The span at glutamine 117–arginine 136 shows a compositional bias: basic and acidic residues. Positions arginine 137 to proline 146 are enriched in basic residues. Positions arginine 147–histidine 177 are enriched in basic and acidic residues.

It belongs to the ProQ family.

Its subcellular location is the cytoplasm. Its function is as follows. RNA chaperone with significant RNA binding, RNA strand exchange and RNA duplexing activities. May regulate ProP activity through an RNA-based, post-transcriptional mechanism. This is RNA chaperone ProQ from Shigella boydii serotype 18 (strain CDC 3083-94 / BS512).